A 214-amino-acid chain; its full sequence is Osteoclast-stimulating factor 1 (214 aa).

Positions G12–E71 constitute an SH3 domain. ANK repeat units lie at residues T72 to G101, A105 to Q135, and L139 to I168.

As to expression, ubiquitously expressed.

It is found in the cytoplasm. Its function is as follows. Induces bone resorption, acting probably through a signaling cascade which results in the secretion of factor(s) enhancing osteoclast formation and activity. This Monopterus albus (Swamp eel) protein is Osteoclast-stimulating factor 1 (ostf1).